Consider the following 154-residue polypeptide: MADEQLQLPPEQISVLRKAFDAFDREKSGSISTNMVEEILRLMGQPFNRRTLEELIDEVDADKSGRLEFDEFVTLAAKFIIEEDSEAMEKELREAFRLYDKEGNGYIPTSCLREILRELDEQLTSDELDMMIEEIDADGSGTVDFDEFMEMMTG.

EF-hand domains follow at residues glutamate 11–proline 46, phenylalanine 47–glutamate 82, alanine 87–glutamine 122, and leucine 123–glycine 154. The Ca(2+) site is built by aspartate 60, aspartate 62, serine 64, arginine 66, and glutamate 71. Ca(2+)-binding residues include aspartate 136, aspartate 138, serine 140, threonine 142, and glutamate 147.

Belongs to the troponin C family.

Its function is as follows. Troponin is the central regulatory protein of striated muscle contraction. It consists of three components: Troponin-I (Tn-I) which is the inhibitor of actomyosin ATPase, Troponin-T (Tn-T) which contains the binding site for tropomyosin and Troponin-C (Tn-C). The binding of calcium to Tn-C abolishes the inhibitory action of Tn on actin filaments. The protein is Troponin C, isoallergen Bla g 6.0301 of Blattella germanica (German cockroach).